A 617-amino-acid chain; its full sequence is Protein fem-1 homolog C (617 aa).

ANK repeat units lie at residues 2-31 (DLKT…KDDV), 40-70 (NGAT…SVEI), 82-111 (EGAP…SVNN), 115-144 (TNST…DLEV), 148-177 (HGHT…DVNR), 181-210 (KGNT…RMEK), and 213-242 (YGMT…TSKN). TPR repeat units follow at residues 245-279 (INAL…RHSD) and 338-371 (SYYI…QQNN). 2 ANK repeats span residues 481-523 (NNFS…DVNV) and 527-556 (EQNS…HFDS).

The protein belongs to the fem-1 family. Component of a CRL2 E3 ubiquitin-protein ligase complex, also named ECS (Elongin BC-CUL2/5-SOCS-box protein) complex.

It functions in the pathway protein modification; protein ubiquitination. Substrate-recognition component of a Cul2-RING (CRL2) E3 ubiquitin-protein ligase complex of the DesCEND (destruction via C-end degrons) pathway, which recognizes a C-degron located at the extreme C terminus of target proteins, leading to their ubiquitination and degradation. The C-degron recognized by the DesCEND pathway is usually a motif of less than ten residues and can be present in full-length proteins, truncated proteins or proteolytically cleaved forms. The CRL2(FEM1C) complex specifically recognizes proteins with an arginine at the C-terminus: recognizes and binds proteins ending with -Lys/Arg-Xaa-Arg and -Lys/Arg-Xaa-Xaa-Arg C-degrons, leading to their ubiquitination and degradation. The protein is Protein fem-1 homolog C of Xenopus laevis (African clawed frog).